A 673-amino-acid polypeptide reads, in one-letter code: UvrABC system protein B (673 aa).

One can recognise a Helicase ATP-binding domain in the interval 26 to 183 (EGLEDGLAHQ…RRLAELQYTR (158 aa)). An ATP-binding site is contributed by 39–46 (GVTGSGKT). The Beta-hairpin motif lies at 92 to 115 (YYDYYQPEAYVPSSDTFIEKDASV). Residues 431–597 (QVDDLLSEIR…GLNKKVVDIL (167 aa)) enclose the Helicase C-terminal domain. A UVR domain is found at 633-668 (QQKIHELEGQMMQHAQNLEFEEAAQIRDQLHQLREL).

It belongs to the UvrB family. Forms a heterotetramer with UvrA during the search for lesions. Interacts with UvrC in an incision complex.

The protein resides in the cytoplasm. The UvrABC repair system catalyzes the recognition and processing of DNA lesions. A damage recognition complex composed of 2 UvrA and 2 UvrB subunits scans DNA for abnormalities. Upon binding of the UvrA(2)B(2) complex to a putative damaged site, the DNA wraps around one UvrB monomer. DNA wrap is dependent on ATP binding by UvrB and probably causes local melting of the DNA helix, facilitating insertion of UvrB beta-hairpin between the DNA strands. Then UvrB probes one DNA strand for the presence of a lesion. If a lesion is found the UvrA subunits dissociate and the UvrB-DNA preincision complex is formed. This complex is subsequently bound by UvrC and the second UvrB is released. If no lesion is found, the DNA wraps around the other UvrB subunit that will check the other stand for damage. The sequence is that of UvrABC system protein B from Klebsiella pneumoniae subsp. pneumoniae (strain ATCC 700721 / MGH 78578).